Reading from the N-terminus, the 258-residue chain is Hydroxyacylglutathione hydrolase (258 aa).

Positions 54, 56, 58, 59, 113, 138, and 176 each coordinate Zn(2+).

Belongs to the metallo-beta-lactamase superfamily. Glyoxalase II family. In terms of assembly, monomer. It depends on Zn(2+) as a cofactor.

The enzyme catalyses an S-(2-hydroxyacyl)glutathione + H2O = a 2-hydroxy carboxylate + glutathione + H(+). It participates in secondary metabolite metabolism; methylglyoxal degradation; (R)-lactate from methylglyoxal: step 2/2. Thiolesterase that catalyzes the hydrolysis of S-D-lactoyl-glutathione to form glutathione and D-lactic acid. This is Hydroxyacylglutathione hydrolase from Synechococcus sp. (strain ATCC 27144 / PCC 6301 / SAUG 1402/1) (Anacystis nidulans).